Consider the following 247-residue polypeptide: Suppressor of silencing P0 (247 aa).

The F-box-like domain maps to 76 to 95 (LPRHLHYECLEWGLLCGTHP).

The protein belongs to the polerovirus P0 protein family.

Its function is as follows. Suppressor of RNA-mediated gene silencing, also known as post-transcriptional gene silencing (PTGS), a mechanism of plant viral defense that limits the accumulation of viral RNAs. The P0 protein suppresses local PTGS using its F-box-like domain to mediate destabilization and degradation of the AGO1 protein, although not via an interaction with host SKP1A. Participates, together with the proteins P1 and P7, in the inhibition of the induction of aphid-induced host phytohormones. This could play a role in the attraction to the infected plants by aphids. The chain is Suppressor of silencing P0 from Potato leafroll virus (strain Potato/Scotland/strain 1/1984) (PLrV).